Here is a 707-residue protein sequence, read N- to C-terminus: MGCKISTEFCSDNPVGSISTSKVHPTDLSTPSYAIKPVEFYEEPLKDDQLFYKVALAKKEYREKEKDKKEQLSSNRRVSLQVEPNKLPIPLTRSSSLSSIMENRPPSGISNSSFIRSRNTASRRFTIDTSRAKSNQYVVSLCSKKIGIIEYPDGRSDKQPCDVYWHNVVLSDMNKIVTSPQSRVNKFPGMTELAKKISLTHSISSMQKLFPDEYAFYPNSWFLPAHLADFHAFYRKAQALGKTEMWFIVKPDEGAQGTGIYLINSPNQIRNVDQRQLVQEYVADPLLMNDKLKFDFRVYGVIKSINPLSIYVAREGMARFCTEKYEKPDSSNFKNLYAHLTNYSLNKANEAYVHSNTLQDQTRGSKRLLSTVFHQLESRGVKTKRLWHDIKLILVKTTLAMLPEIMLHYEHHFYDSTGPQCFQIMGFDVMIREDGTPILLEVNAAPSLTADHIVPHPGRTLLEGGQRVRSIVDEVIKIPLVRDTLLLVLGLMEEEYQNNSLKGETKSLDDMQTIKQRRKPHLSEIFPTRYGAHSGHLLFLDKAMYIYMQFVQLRSNVNITNAGLKQFVRKCNLIDIIPVVHVDAKVSEINYYFTGEKRTNGNGLPFHAFLMFLFFIAEKKFVLENDLLSKVQRLLSFCDMSLRRYGVRSARLRRAEVDSTIGNVEIYMLPSRMARNRSGTNGRKQNFTDDNNNPNSFAHLPKINERL.

The region spanning 124 to 488 (RFTIDTSRAK…PLVRDTLLLV (365 aa)) is the TTL domain. ATP-binding positions include 279-282 (QEYV), lysine 293, and aspartate 295. The tract at residues 675-707 (RNRSGTNGRKQNFTDDNNNPNSFAHLPKINERL) is disordered. The span at 677-696 (RSGTNGRKQNFTDDNNNPNS) shows a compositional bias: polar residues.

This sequence belongs to the tubulin--tyrosine ligase family. As to expression, expressed in amphid sensory neurons. Weakly expressed in body wall muscles. Isoform a: Specifically expressed in ciliated sensory neurons in the head, including the IL1s, OLQ, head CEP, and amphid neurons. In the male tail, expressed in HOA, RnA, and phasmid neurons. Isoform b: Specifically expressed in male and hermaphrodite IL2 ciliated sensory neurons, and in male-specific CEM, HOB and RnB ciliated sensory neurons.

The protein localises to the cell projection. It is found in the axon. Its subcellular location is the perikaryon. The protein resides in the dendrite. It localises to the cilium. The protein localises to the extracellular vesicle. The enzyme catalyses L-glutamyl-[protein] + L-glutamate + ATP = gamma-L-glutamyl-L-glutamyl-[protein] + ADP + phosphate + H(+). In terms of biological role, polyglutamylase which preferentially modifies tubulin. Involved in the side-chain initiation step of the polyglutamylation reaction. By controlling tubulin glutamylation, regulates ciliary specialization and motor-based transport. Promotes the formation of A and B tubule singlets by splaying microtubule doublets in cilia. Together with ttll-4 and 5, required for male mating. Specifically promotes tubulin glutamylation in a subset of ciliated neurons including amphid, phasmid, CEP and RnA neurons. Its function is as follows. Specifically promotes tubulin glutamylation in male ciliated CEM, HOB and RnB neurons that release bioactive extracellular vesicles. Regulates the localization of TRP channel pdk-2 in male CEM, HOB and RnB neurons. Regulates the environmental release of bioactive extracellular vesicles in cilia. In Caenorhabditis elegans, this protein is Tubulin polyglutamylase ttll-11.